Consider the following 543-residue polypeptide: Exodeoxyribonuclease 7 large subunit (543 aa).

Residues 498–543 form a disordered region; that stretch reads VTGEGDKASPPPQAASATTTPAPGRPNPLPKSPKKSEPPAGQGSLF.

It belongs to the XseA family. In terms of assembly, heterooligomer composed of large and small subunits.

The protein resides in the cytoplasm. It carries out the reaction Exonucleolytic cleavage in either 5'- to 3'- or 3'- to 5'-direction to yield nucleoside 5'-phosphates.. Its function is as follows. Bidirectionally degrades single-stranded DNA into large acid-insoluble oligonucleotides, which are then degraded further into small acid-soluble oligonucleotides. This is Exodeoxyribonuclease 7 large subunit from Allorhizobium ampelinum (strain ATCC BAA-846 / DSM 112012 / S4) (Agrobacterium vitis (strain S4)).